Consider the following 450-residue polypeptide: Serine incorporator 2 (450 aa).

Transmembrane regions (helical) follow at residues 5-27 (LGAC…ILCG), 40-57 (LLFT…IIML), 96-118 (AVYR…MICV), 131-150 (GFWF…AFYI), 160-182 (FYFG…VDFA), 203-225 (AGLF…LMFV), 238-257 (VFIS…AVLP), 264-286 (PNSG…WSAL), 315-337 (VWWD…FISL), 380-402 (TYSY…MTLT), and 417-439 (WTSV…WTLV).

This sequence belongs to the TDE1 family.

It is found in the cell membrane. It catalyses the reaction a 1,2-diacyl-sn-glycero-3-phospho-L-serine(in) = a 1,2-diacyl-sn-glycero-3-phospho-L-serine(out). It carries out the reaction a 1,2-diacyl-sn-glycero-3-phosphocholine(in) = a 1,2-diacyl-sn-glycero-3-phosphocholine(out). The catalysed reaction is a 1,2-diacyl-sn-glycero-3-phosphoethanolamine(in) = a 1,2-diacyl-sn-glycero-3-phosphoethanolamine(out). Non-ATP-dependent, non-specific lipid transporter for phosphatidylserine, phosphatidylcholine, and phosphatidylethanolamine. Functions as a scramblase that flips lipids in both directions across the membrane. In contrast to SERINC3 and SERINC5, has no effect on gammaretrovirus particles infectivity. This Mus musculus (Mouse) protein is Serine incorporator 2 (Serinc2).